The sequence spans 128 residues: MTGSCCGSTLSSLSYGGGCCQPCCCRDPCCCRPVTCQTTVCRPVTCVPRCTRPICEPCRRPVCCDPCSLQEGCCRPITCCPSSCTAVVCRPCCWATTCCQPVSVQSPCCRPPCGQPTPCSTTCRTSSC.

Residues 5-112 (CCGSTLSSLS…SVQSPCCRPP (108 aa)) form a 10 X 5 AA repeats of C-C-[CDPQRWG]-[APRS]-[CIPSTVD] region.

It belongs to the KRTAP type 2 family. In terms of assembly, interacts with hair keratins.

In the hair cortex, hair keratin intermediate filaments are embedded in an interfilamentous matrix, consisting of hair keratin-associated proteins (KRTAP), which are essential for the formation of a rigid and resistant hair shaft through their extensive disulfide bond cross-linking with abundant cysteine residues of hair keratins. The matrix proteins include the high-sulfur and high-glycine-tyrosine keratins. In Homo sapiens (Human), this protein is Keratin-associated protein 2-3 (KRTAP2-3).